A 221-amino-acid polypeptide reads, in one-letter code: MSDQINVLSMQQQQQQQQQQQQVYMSPQAENLNHMYLLVNKLVKQLRENQAEKAKILRNIDILSGSLNKYETSEEPHDTTENIALFNRFLEQRGKAPITEKEQLSNNLDENAKDDVMLGVLKRQNSMLRKSLQESKQVTLESMDLLSYSEDSLNYIVAQLRGNILMHHKETIKLIRQKFQTETIPLEDEEFKMYLENVNGLQKLTDISHTYRLLLRLHAQD.

In terms of assembly, component of a complex at least composed of FAR3, FAR7, FAR8, FAR10, FAR11 and VPS64.

Its function is as follows. Participates in the control of the reentry into the cell cycle following pheromone treatment. This Saccharomyces cerevisiae (strain ATCC 204508 / S288c) (Baker's yeast) protein is Factor arrest protein 7 (FAR7).